Reading from the N-terminus, the 115-residue chain is Phosphoribosyl-AMP cyclohydrolase (115 aa).

Residue aspartate 80 participates in Mg(2+) binding. Cysteine 81 contributes to the Zn(2+) binding site. The Mg(2+) site is built by aspartate 82 and aspartate 84. Zn(2+)-binding residues include cysteine 97 and cysteine 104.

Belongs to the PRA-CH family. In terms of assembly, homodimer. Mg(2+) serves as cofactor. Zn(2+) is required as a cofactor.

The protein resides in the cytoplasm. The enzyme catalyses 1-(5-phospho-beta-D-ribosyl)-5'-AMP + H2O = 1-(5-phospho-beta-D-ribosyl)-5-[(5-phospho-beta-D-ribosylamino)methylideneamino]imidazole-4-carboxamide. The protein operates within amino-acid biosynthesis; L-histidine biosynthesis; L-histidine from 5-phospho-alpha-D-ribose 1-diphosphate: step 3/9. In terms of biological role, catalyzes the hydrolysis of the adenine ring of phosphoribosyl-AMP. The chain is Phosphoribosyl-AMP cyclohydrolase from Mycolicibacterium gilvum (strain PYR-GCK) (Mycobacterium gilvum (strain PYR-GCK)).